The sequence spans 353 residues: Serine/threonine-protein phosphatase 2A activator 1 (353 aa).

Residues 331–353 form a disordered region; the sequence is ANNATTKMPPPLSTSTSRFIHRR. The span at 343 to 353 shows a compositional bias: polar residues; that stretch reads STSTSRFIHRR.

Belongs to the PTPA-type PPIase family.

The protein resides in the cytoplasm. It is found in the nucleus. It carries out the reaction [protein]-peptidylproline (omega=180) = [protein]-peptidylproline (omega=0). Its function is as follows. PPIases accelerate the folding of proteins. It catalyzes the cis-trans isomerization of proline imidic peptide bonds in oligopeptides. Acts as a regulatory subunit for PP2A-like phosphatases modulating their activity or substrate specificity, probably by inducing a conformational change in the catalytic subunit, a direct target of the PPIase. Can reactivate inactive phosphatase PP2A-phosphatase methylesterase complexes (PP2Ai) in presence of ATP and Mg(2+) by dissociating the inactive form from the complex. The protein is Serine/threonine-protein phosphatase 2A activator 1 (RRD1) of Kluyveromyces lactis (strain ATCC 8585 / CBS 2359 / DSM 70799 / NBRC 1267 / NRRL Y-1140 / WM37) (Yeast).